Consider the following 135-residue polypeptide: Large ribosomal subunit protein bL19 (135 aa).

Belongs to the bacterial ribosomal protein bL19 family.

In terms of biological role, this protein is located at the 30S-50S ribosomal subunit interface and may play a role in the structure and function of the aminoacyl-tRNA binding site. This is Large ribosomal subunit protein bL19 from Xanthomonas oryzae pv. oryzae (strain KACC10331 / KXO85).